Here is a 459-residue protein sequence, read N- to C-terminus: MHNIHRRNFLKAAGAATAGLVTANIALSAYASSVAPKPQAGKSVIGLIAPKMDVVRVGFIGVGERGFSHVEQFCHLEGVELKAICDTHQAVLDRAVDHIVKQNRPKPAVYTGNDLSYRDLLSRDDIDIVIISTPWEWHAPMAIETMESGKHAFVEVPMALTVEECWQVVDTAERTQKNCMMMENVNYGREELMVLNMVRQGVFGELLHGEAAYIHELRWQMKEIDHKTGSWRTYWHTKRNGNLYPTHGLGPVSQYMNINRGDRFDYLTSMSSPALGRALYAKREFPADHERNQLKYINGDINTSLIKTVKGRTIMVQHDTTTPRPYSRHNLIQGTNGVFAGFPNRIAVENGGFGQSYHEWDMDMQKWYDKYDHPLWQRIGKEAEINGGHGGMDFVMLWRMIYCLRNGETLDQDVYDGASWSVVNILSEHSLNDRSNSVTFPDFTRGAWQTAKPLGIIGA.

The tat-type signal signal peptide spans 1–31 (MHNIHRRNFLKAAGAATAGLVTANIALSAYA). Residues 64–65 (ER), D86, 135–138 (WEWH), 155–156 (EV), and N184 contribute to the NAD(+) site. Substrate contacts are provided by residues Y213, R232, 244–247 (YPTH), and Y326. Y244 contributes to the NAD(+) binding site.

The protein belongs to the Gfo/Idh/MocA family. Glycosyl hydrolase 109 subfamily. The cofactor is NAD(+). Predicted to be exported by the Tat system. The position of the signal peptide cleavage has not been experimentally proven.

Its function is as follows. Glycosidase. The chain is Glycosyl hydrolase family 109 protein from Shewanella baltica (strain OS185).